We begin with the raw amino-acid sequence, 102 residues long: Putative septation protein SpoVG 1 (102 aa).

The protein belongs to the SpoVG family.

Its function is as follows. Could be involved in septation. The protein is Putative septation protein SpoVG 1 of Listeria innocua serovar 6a (strain ATCC BAA-680 / CLIP 11262).